Consider the following 187-residue polypeptide: Putative lipoprotein LppJ (187 aa).

A signal peptide spans 1 to 28 (MPHSTADRRLRLTRQALLAAAVAPLLAG). C29 carries N-palmitoyl cysteine lipidation. C29 is lipidated: S-diacylglycerol cysteine.

Its subcellular location is the cell membrane. The sequence is that of Putative lipoprotein LppJ (lppJ) from Mycobacterium bovis (strain ATCC BAA-935 / AF2122/97).